We begin with the raw amino-acid sequence, 1450 residues long: Protein TIC 214 (1450 aa).

6 consecutive transmembrane segments (helical) span residues 29 to 49 (FGLY…IVVI), 61 to 81 (VMAF…IYYT), 86 to 106 (LFIK…FYWQ), 132 to 152 (FFDS…PIFF), 166 to 186 (LNFF…FFNA), and 213 to 233 (IIPI…HIPF).

It belongs to the TIC214 family. As to quaternary structure, part of the Tic complex.

It localises to the plastid. Its subcellular location is the chloroplast inner membrane. Functionally, involved in protein precursor import into chloroplasts. May be part of an intermediate translocation complex acting as a protein-conducting channel at the inner envelope. In Chaetosphaeridium globosum (Charophycean green alga), this protein is Protein TIC 214.